The chain runs to 152 residues: Natriuretic peptides A (152 aa).

A signal peptide spans 1-24 (MGSSAITTSFLLFVAFQLPGQTGA). Propeptides lie at residues 25–122 (NPVY…TAPR) and 92–102 (EMGAPSDGDPG). The segment at 50 to 108 (MPLEDEAVPSQVLSEQNEEAGAPLSPLSEVPPWDGGRSTQPREMGAPSDGDPGNPPRSV) is disordered. Phosphoserine is present on Ser-128. Cys-129 and Cys-145 are disulfide-bonded. Residues 146 to 150 (NSFRY) form an important for degradation of atrial natriuretic peptide by IDE region.

It belongs to the natriuretic peptide family. Homodimer; disulfide-linked antiparallel dimer. Post-translationally, the precursor molecule is proteolytically cleaved by CORIN at Arg-122 to produce the atrial natriuretic peptide. Undergoes further proteolytic cleavage by unknown proteases to give rise to long-acting natriuretic peptide, vessel dilator and kaliuretic peptide. Additional processing gives rise to the auriculin and atriopeptin peptides. In the kidneys, alternative processing by an unknown protease results in the peptide urodilatin. In terms of processing, cleavage by MME initiates degradation of the factor and thereby regulates its activity. Degradation by IDE results in reduced activation of NPR1 (in vitro). During IDE degradation, the resulting products can temporarily stimulate NPR2 to produce cGMP, before the fragments are completely degraded and inactivated by IDE (in vitro). Degraded by IDE. Post-translationally, phosphorylation on Ser-128 decreases vasorelaxant activity.

The protein resides in the secreted. It localises to the perikaryon. It is found in the cell projection. Its function is as follows. Hormone that plays a key role in mediating cardio-renal homeostasis, and is involved in vascular remodeling and regulating energy metabolism. Acts by specifically binding and stimulating NPR1 to produce cGMP, which in turn activates effector proteins, such as PRKG1, that drive various biological responses. Regulates vasodilation, natriuresis, diuresis and aldosterone synthesis and is therefore essential for regulating blood pressure, controlling the extracellular fluid volume and maintaining the fluid-electrolyte balance. Also involved in inhibiting cardiac remodeling and cardiac hypertrophy by inducing cardiomyocyte apoptosis and attenuating the growth of cardiomyocytes and fibroblasts. Plays a role in female pregnancy by promoting trophoblast invasion and spiral artery remodeling in uterus, and thus prevents pregnancy-induced hypertension. In adipose tissue, acts in various cGMP- and PKG-dependent pathways to regulate lipid metabolism and energy homeostasis. This includes up-regulating lipid metabolism and mitochondrial oxygen utilization by activating the AMP-activated protein kinase (AMPK), and increasing energy expenditure by acting via MAPK11 to promote the UCP1-dependent thermogenesis of brown adipose tissue. Binds the clearance receptor NPR3 which removes the hormone from circulation. May have a role in cardio-renal homeostasis through regulation of natriuresis, diuresis, vasodilation, and inhibiting aldosterone synthesis. In vitro, promotes the production of cGMP and induces vasodilation. May promote natriuresis, at least in part, by enhancing prostaglandin E2 synthesis resulting in the inhibition of renal Na+-K+-ATPase. However reports on the involvement of this peptide in mammal blood volume and blood pressure homeostasis are conflicting; according to a report, in vivo it is not sufficient to activate cGMP and does not inhibit collecting duct transport nor effect diuresis and natriuresis. Appears to bind to specific receptors that are distinct from the receptors bound by atrial natriuretic peptide and vessel dilator. Possibly enhances protein excretion in urine by decreasing proximal tubular protein reabsorption. In terms of biological role, may have a role in cardio-renal homeostasis through regulation of natriuresis, diuresis, and vasodilation. In vitro, promotes the production of cGMP and induces vasodilation. May promote natriuresis, at least in part, by enhancing prostaglandin E2 synthesis resulting in the inhibition of renal Na+-K+-ATPase. However reports on the involvement of this peptide in mammal blood volume and blood pressure homeostasis are conflicting; according to a report it is not sufficient to activate cGMP and does not inhibit collecting duct transport nor effect diuresis and natriuresis. Appears to bind to specific receptors that are distinct from the receptors bound by the atrial natriuretic and long-acting natriuretic peptides. Possibly functions in protein excretion in urine by maintaining the integrity of the proximal tubules and enhancing protein excretion by decreasing proximal tubular protein reabsorption. Functionally, may have a role in cardio-renal homeostasis through regulation of diuresis and inhibiting aldosterone synthesis. In vitro, promotes the production of cGMP and induces vasodilation. May promote natriuresis, at least in part, by enhancing prostaglandin E2 synthesis resulting in the inhibition of renal Na+-K+-ATPase. May have a role in potassium excretion but not sodium excretion (natriuresis). Possibly enhances protein excretion in urine by decreasing proximal tubular protein reabsorption. Its function is as follows. Hormone produced in the kidneys that appears to be important for maintaining cardio-renal homeostasis. Mediates vasodilation, natriuresis and diuresis primarily in the renal system, in order to maintain the extracellular fluid volume and control the fluid-electrolyte balance. Specifically binds and stimulates cGMP production by renal transmembrane receptors, likely NPR1. Urodilatin not ANP, may be the natriuretic peptide responsible for the regulation of sodium and water homeostasis in the kidney. May have a role in cardio-renal homeostasis through regulation of natriuresis and vasodilation. In vivo promotes natriuresis and in vitro, vasodilates renal artery strips. In terms of biological role, may have a role in cardio-renal homeostasis through regulation of regulation of natriuresis and vasodilation. In vivo promotes natriuresis. In vitro, vasodilates intestinal smooth muscle but not smooth muscle strips. Functionally, may have a role in cardio-renal homeostasis through regulation of natriuresis and vasodilation. In vivo promotes natriuresis. In vitro, selectively vasodilates intestinal and vascular smooth muscle strips. Its function is as follows. May have a role in cardio-renal homeostasis through regulation of natriuresis and vasodilation. In vivo promotes natriuresis. In vitro, selectively vasodilates intestinal smooth muscle but not vascular smooth muscle strips. This is Natriuretic peptides A (NPPA) from Ovis aries (Sheep).